The sequence spans 1314 residues: Angiotensin-converting enzyme (1314 aa).

Residues 1-35 form the signal peptide; sequence MGAASGQRGQGPPSPLLLLWLSLLLLLLPPSPAPA. The Extracellular portion of the chain corresponds to 36–1265; sequence LDPGLQPGNF…LEPQQARVGQ (1230 aa). N-linked (GlcNAc...) asparagine glycans are attached at residues asparagine 44, asparagine 60, asparagine 80, asparagine 117, and asparagine 166. 2 Peptidase M2 domains span residues 46-630 and 649-1228; these read SADE…LGWP and VTDE…LGWP. The cysteines at positions 163 and 171 are disulfide-linked. Tyrosine 237 serves as a coordination point for chloride. Asparagine 324 is a glycosylation site (N-linked (GlcNAc...) asparagine). The cysteines at positions 365 and 383 are disulfide-linked. Histidine 396 provides a ligand contact to Zn(2+). Residue glutamate 397 is the Proton acceptor 1 of the active site. The Zn(2+) site is built by histidine 400 and glutamate 424. N-linked (GlcNAc...) asparagine glycosylation is present at asparagine 515. The active-site Proton donor 1 is histidine 526. Position 535 (arginine 535) interacts with chloride. Cysteines 551 and 563 form a disulfide. Residues asparagine 683, asparagine 701, asparagine 720, and asparagine 766 are each glycosylated (N-linked (GlcNAc...) asparagine). An intrachain disulfide couples cysteine 763 to cysteine 769. The chloride site is built by arginine 797 and tyrosine 835. N-linked (GlcNAc...) asparagine glycosylation occurs at asparagine 948. A disulfide bridge connects residues cysteine 963 and cysteine 981. Histidine 994 serves as a coordination point for Zn(2+). Glutamate 995 serves as the catalytic Proton acceptor 2. Zn(2+) is bound by residues histidine 998 and glutamate 1022. 2 residues coordinate chloride: tryptophan 1096 and arginine 1100. The active-site Proton donor 2 is histidine 1124. Position 1133 (arginine 1133) interacts with chloride. Residues cysteine 1149 and cysteine 1161 are joined by a disulfide bond. The N-linked (GlcNAc...) asparagine glycan is linked to asparagine 1197. A juxtamembrane stalk region spans residues 1221–1262; the sequence is HGETLGWPEYNWTPNTARSEGPFPESGRVNFLGMYLEPQQAR. The chain crosses the membrane as a helical span at residues 1266 to 1282; it reads WVLLFLGVSLLVATLGL. The Cytoplasmic portion of the chain corresponds to 1283–1314; it reads THRLFSIRQHGHSLHRPHRGPQFGSEVELRHS. The interval 1293 to 1314 is disordered; it reads GHSLHRPHRGPQFGSEVELRHS. The residue at position 1307 (serine 1307) is a Phosphoserine.

Belongs to the peptidase M2 family. In terms of assembly, monomer and homodimer; homodimerizes following binding to an inhibitor. Interacts with calmodulin (CALM1, CALM2 or CALM3); interaction takes place in the cytoplasmic region and regulates phosphorylation and proteolytic cleavage. The cofactor is Zn(2+). Requires chloride as cofactor. Post-translationally, produced following proteolytic cleavage by secretase enzymes that cleave the transmembrane form in the juxtamembrane stalk region upstream of the transmembrane region. Cleavage can take place at different sites of the juxtamembrane stalk region. In terms of processing, phosphorylated by CK2 on Ser-1307; which allows membrane retention. Phosphorylated on tyrosine residues on its extracellular part, promoting cleavage by secretase enzymes and formation of the soluble form (Angiotensin-converting enzyme, soluble form). In terms of tissue distribution, widely expressed with dominant expression in lung and kidney.

The protein resides in the cell membrane. It localises to the cytoplasm. The protein localises to the secreted. It carries out the reaction Release of a C-terminal dipeptide, oligopeptide-|-Xaa-Yaa, when Xaa is not Pro, and Yaa is neither Asp nor Glu. Thus, conversion of angiotensin I to angiotensin II, with increase in vasoconstrictor activity, but no action on angiotensin II.. The catalysed reaction is angiotensin I + H2O = L-histidyl-L-leucine + angiotensin II. The enzyme catalyses bradykinin + H2O = L-Phe-L-Arg + bradykinin(1-7). It catalyses the reaction substance P + H2O = substance P(1-9) + L-Leu-L-Met-NH2. It carries out the reaction substance P + H2O = substance P(1-8) + Gly-L-Leu-L-Met-NH2. The catalysed reaction is substance P + H2O = L-Phe-L-Phe-Gly-L-Leu-L-Met-NH2 + substance P(1-6). The enzyme catalyses neurotensin + H2O = neurotensin(1-11) + L-isoleucyl-L-leucine. It catalyses the reaction goralatide + H2O = N-acetyl-L-seryl-L-aspartate + L-lysyl-L-proline. It carries out the reaction Met-enkephalin + H2O = L-phenylalanyl-L-methionine + L-tyrosylglycylglycine. The catalysed reaction is Leu-enkephalin + H2O = L-tyrosylglycylglycine + L-phenylalanyl-L-leucine. The enzyme catalyses Met-enkephalin-Arg-Phe + H2O = L-arginyl-L-phenylalanine + Met-enkephalin. Its activity is regulated as follows. The dipeptidyl carboxypeptidase activity is strongly activated by chloride. The dipeptidyl carboxypeptidase activity is specifically inhibited by lisinopril, captopril and enalaprilat. With respect to regulation, strongly inhibited by lisinopril and captopril. Its function is as follows. Dipeptidyl carboxypeptidase that removes dipeptides from the C-terminus of a variety of circulating hormones, such as angiotensin I, bradykinin or enkephalins, thereby playing a key role in the regulation of blood pressure, electrolyte homeostasis or synaptic plasticity. Composed of two similar catalytic domains, each possessing a functional active site, with different selectivity for substrates. Plays a major role in the angiotensin-renin system that regulates blood pressure and sodium retention by the kidney by converting angiotensin I to angiotensin II, resulting in an increase of the vasoconstrictor activity of angiotensin. Also able to inactivate bradykinin, a potent vasodilator, and therefore enhance the blood pressure response. Acts as a regulator of synaptic transmission by mediating cleavage of neuropeptide hormones, such as substance P, neurotensin or enkephalins. Catalyzes degradation of different enkephalin neuropeptides (Met-enkephalin, Leu-enkephalin, Met-enkephalin-Arg-Phe and possibly Met-enkephalin-Arg-Gly-Leu). Acts as a regulator of synaptic plasticity in the nucleus accumbens of the brain by mediating cleavage of Met-enkephalin-Arg-Phe, a strong ligand of Mu-type opioid receptor OPRM1, into Met-enkephalin. Met-enkephalin-Arg-Phe cleavage by ACE decreases activation of OPRM1, leading to long-term synaptic potentiation of glutamate release. Also acts as a regulator of hematopoietic stem cell differentiation by mediating degradation of hemoregulatory peptide N-acetyl-SDKP (AcSDKP). Acts as a regulator of cannabinoid signaling pathway by mediating degradation of hemopressin, an antagonist peptide of the cannabinoid receptor CNR1. Involved in amyloid-beta metabolism by catalyzing degradation of Amyloid-beta protein 40 and Amyloid-beta protein 42 peptides, thereby preventing plaque formation. Catalyzes cleavage of cholecystokinin (maturation of Cholecystokinin-8 and Cholecystokinin-5) and Gonadoliberin-1 (both maturation and degradation) hormones. Degradation of hemoregulatory peptide N-acetyl-SDKP (AcSDKP) and amyloid-beta proteins is mediated by the N-terminal catalytic domain, while angiotensin I and cholecystokinin cleavage is mediated by the C-terminal catalytic region. Functionally, soluble form that is released in blood plasma and other body fluids following proteolytic cleavage in the juxtamembrane stalk region. In terms of biological role, isoform produced by alternative promoter usage that is specifically expressed in spermatocytes and adult testis, and which is required for male fertility. In contrast to somatic isoforms, only contains one catalytic domain. Acts as a dipeptidyl carboxypeptidase that removes dipeptides from the C-terminus of substrates. The identity of substrates that are needed for male fertility is unknown. May also have a glycosidase activity which releases GPI-anchored proteins from the membrane by cleaving the mannose linkage in the GPI moiety. The GPIase activity was reported to be essential for the egg-binding ability of the sperm. This activity is however unclear and has been challenged by other groups, suggesting that it may be indirect. The sequence is that of Angiotensin-converting enzyme from Mesocricetus auratus (Golden hamster).